The sequence spans 346 residues: D-alanine--D-alanine ligase (346 aa).

The 195-residue stretch at 133–327 (KLYAKSVGVK…ALADQISLEK (195 aa)) folds into the ATP-grasp domain. 159-211 (LSFPCIIKPARLGSSIGISIVKDEKDLEYAKDVGFEFDNDLVVEEFKNNIKEY) serves as a coordination point for ATP. Mg(2+)-binding residues include Asp284, Glu296, and Asn298.

Belongs to the D-alanine--D-alanine ligase family. Mg(2+) is required as a cofactor. It depends on Mn(2+) as a cofactor.

The protein resides in the cytoplasm. It catalyses the reaction 2 D-alanine + ATP = D-alanyl-D-alanine + ADP + phosphate + H(+). It functions in the pathway cell wall biogenesis; peptidoglycan biosynthesis. Its function is as follows. Cell wall formation. The sequence is that of D-alanine--D-alanine ligase from Campylobacter jejuni subsp. jejuni serotype O:6 (strain 81116 / NCTC 11828).